Reading from the N-terminus, the 1191-residue chain is Laminin subunit gamma-2 (1191 aa).

A signal peptide spans 1–21 (MPALWLSCCLGVALLLPAAQA). 12 cysteine pairs are disulfide-bonded: C28-C37, C30-C53, C56-C65, C68-C81, C84-C96, C86-C102, C104-C113, C116-C128, C139-C150, C141-C155, C157-C166, and C169-C184. 3 Laminin EGF-like domains span residues 28–83 (CDCN…RCLP), 84–130 (CNCH…GCTR), and 139–186 (CDCD…GCTQ). Positions 187 to 196 (CFCYGHSASC) constitute a Laminin EGF-like 4; first part domain. Residues 213 to 381 (QDVDGWKAVQ…SGAPAPWVER (169 aa)) form the Laminin IV type A domain. Residues N342 and N362 are each glycosylated (N-linked (GlcNAc...) asparagine). The Laminin EGF-like 4; second part domain maps to 382-415 (CVCPAGYKGQFCQECASGYKRDSARLGPFGACVP). Laminin EGF-like domains lie at 416–461 (CNCQ…SCKP), 462–516 (CPCH…PCQR), and 517–572 (CQCN…KCRA). 11 disulfide bridges follow: C462–C470, C464–C481, C484–C493, C496–C514, C517–C531, C519–C538, C541–C550, C553–C570, C573–C585, C575–C591, and C593–C602. N-linked (GlcNAc...) asparagine glycosylation occurs at N526. The 30-residue stretch at 573–602 (CNCSPMGSEPGECRGDGSCVCKPGFGGLNC) folds into the Laminin EGF-like 8; truncated domain. Residues 586 to 588 (RGD) carry the Cell attachment site motif. Positions 603 to 1191 (DHAALTSCPA…CYNTQALEQQ (589 aa)) are domain II and I. Coiled-coil stretches lie at residues 612 to 710 (ACYN…IRAL) and 759 to 786 (LAQE…ETED). An O-linked (Xyl...) (chondroitin sulfate) serine glycan is attached at S805. An N-linked (GlcNAc...) asparagine glycan is attached at N941. Residues 946-996 (EVENILKNLREFDLQVEDRKAEAEEAMKRLSSISQKVADASDKTQQAETAL) are a coiled coil. N1032 carries N-linked (GlcNAc...) asparagine glycosylation. Positions 1139 to 1178 (LMSDLEERVRRQRNHLHLLETSIDGILADVKNLENIRDNL) form a coiled coil.

As to quaternary structure, laminin is a complex glycoprotein, consisting of three different polypeptide chains (alpha, beta, gamma), which are bound to each other by disulfide bonds into a cross-shaped molecule comprising one long and three short arms with globules at each end. Gamma-2 is a subunit of laminin-5 (laminin-332 or epiligrin/kalinin/nicein). Binds to fibulin-1, fibulin-1c, fibulin-2 and nidogen. Post-translationally, O-glycosylated; contains chondroitin sulfate (CS). As to expression, epithelial cells of many tissues, particularly high levels in tongue, hair follicles and kidney. Basement membranes of the collecting tubules of kidney and pancreas.

The protein localises to the secreted. It localises to the extracellular space. It is found in the extracellular matrix. The protein resides in the basement membrane. Its function is as follows. Binding to cells via a high affinity receptor, laminin is thought to mediate the attachment, migration and organization of cells into tissues during embryonic development by interacting with other extracellular matrix components. The polypeptide is Laminin subunit gamma-2 (Lamc2) (Mus musculus (Mouse)).